The primary structure comprises 438 residues: (S)-3,5-dihydroxyphenylglycine transaminase (438 aa).

Lysine 266 is subject to N6-(pyridoxal phosphate)lysine.

This sequence belongs to the class-I pyridoxal-phosphate-dependent aminotransferase family. It depends on pyridoxal 5'-phosphate as a cofactor.

The enzyme catalyses (S)-3,5-dihydroxyphenylglycine + 2-oxoglutarate = 2-(3,5-dihydroxyphenyl)-2-oxoacetate + L-glutamate. It functions in the pathway antibiotic biosynthesis; vancomycin biosynthesis. Its function is as follows. Catalyzes the transamination of p-hydroxybenzoylformate to L-p-hydroxyphenylglycine as part of the biosynthesis of the (S)-3,5-dihydroxyphenylglycine constituent of the glycopeptide antibiotic chloroeremomycin, a member of the vancomycin group of antibiotics. The chain is (S)-3,5-dihydroxyphenylglycine transaminase (hpgT) from Amycolatopsis orientalis (Nocardia orientalis).